The following is a 78-amino-acid chain: Acyl carrier protein (78 aa).

In terms of domain architecture, Carrier spans Ser-2–Lys-77. Ser-37 bears the O-(pantetheine 4'-phosphoryl)serine mark.

This sequence belongs to the acyl carrier protein (ACP) family. Post-translationally, 4'-phosphopantetheine is transferred from CoA to a specific serine of apo-ACP by AcpS. This modification is essential for activity because fatty acids are bound in thioester linkage to the sulfhydryl of the prosthetic group.

It localises to the cytoplasm. It participates in lipid metabolism; fatty acid biosynthesis. Its function is as follows. Carrier of the growing fatty acid chain in fatty acid biosynthesis. This Erythrobacter litoralis (strain HTCC2594) protein is Acyl carrier protein.